The primary structure comprises 121 residues: Small ribosomal subunit protein uS13 (121 aa).

The disordered stretch occupies residues 89–121 (MRHRRGLPVRGQNTKNNARTRKGKKVSIAGKKK). Residues 106-121 (ARTRKGKKVSIAGKKK) show a composition bias toward basic residues.

It belongs to the universal ribosomal protein uS13 family. In terms of assembly, part of the 30S ribosomal subunit. Forms a loose heterodimer with protein S19. Forms two bridges to the 50S subunit in the 70S ribosome.

Functionally, located at the top of the head of the 30S subunit, it contacts several helices of the 16S rRNA. In the 70S ribosome it contacts the 23S rRNA (bridge B1a) and protein L5 of the 50S subunit (bridge B1b), connecting the 2 subunits; these bridges are implicated in subunit movement. Contacts the tRNAs in the A and P-sites. The chain is Small ribosomal subunit protein uS13 from Latilactobacillus sakei subsp. sakei (strain 23K) (Lactobacillus sakei subsp. sakei).